A 98-amino-acid chain; its full sequence is Co-chaperonin GroES (98 aa).

Belongs to the GroES chaperonin family. In terms of assembly, heptamer of 7 subunits arranged in a ring. Interacts with the chaperonin GroEL.

It localises to the cytoplasm. Together with the chaperonin GroEL, plays an essential role in assisting protein folding. The GroEL-GroES system forms a nano-cage that allows encapsulation of the non-native substrate proteins and provides a physical environment optimized to promote and accelerate protein folding. GroES binds to the apical surface of the GroEL ring, thereby capping the opening of the GroEL channel. The sequence is that of Co-chaperonin GroES from Bartonella quintana (strain Toulouse) (Rochalimaea quintana).